A 64-amino-acid polypeptide reads, in one-letter code: Conotoxin Pu3.5 (64 aa).

Residues 1–16 (LGVLLTICLLLFPLTA) form the signal peptide. Positions 17-49 (VPLDGDQPADQPAGRMQDDISSEQHPFFDPVKR) are excised as a propeptide. Intrachain disulfides connect Cys50–Cys63, Cys51–Cys58, and Cys54–Cys62.

It belongs to the conotoxin M superfamily. As to expression, expressed by the venom duct.

It is found in the secreted. The chain is Conotoxin Pu3.5 from Conus pulicarius (Flea-bitten cone).